We begin with the raw amino-acid sequence, 188 residues long: Dual specificity protein phosphatase 18 (188 aa).

A Tyrosine-protein phosphatase domain is found at 19 to 160 (GLSQITKSLY…LIHYEFQLFG (142 aa)). Residue cysteine 104 is the Phosphocysteine intermediate of the active site.

Belongs to the protein-tyrosine phosphatase family. Non-receptor class dual specificity subfamily. In terms of tissue distribution, widely expressed with highest levels in liver, brain, ovary and testis.

Its subcellular location is the cytoplasm. The protein resides in the nucleus. It localises to the mitochondrion inner membrane. The enzyme catalyses O-phospho-L-tyrosyl-[protein] + H2O = L-tyrosyl-[protein] + phosphate. It catalyses the reaction O-phospho-L-seryl-[protein] + H2O = L-seryl-[protein] + phosphate. The catalysed reaction is O-phospho-L-threonyl-[protein] + H2O = L-threonyl-[protein] + phosphate. Its activity is regulated as follows. Activated by manganese ions, inhibited by iodoacetic acid. In terms of biological role, can dephosphorylate single and diphosphorylated synthetic MAPK peptides, with preference for the phosphotyrosine and diphosphorylated forms over phosphothreonine. In vitro, dephosphorylates p-nitrophenyl phosphate (pNPP). The sequence is that of Dual specificity protein phosphatase 18 (DUSP18) from Homo sapiens (Human).